Reading from the N-terminus, the 186-residue chain is Ribosome-recycling factor (186 aa).

This sequence belongs to the RRF family.

It localises to the cytoplasm. In terms of biological role, responsible for the release of ribosomes from messenger RNA at the termination of protein biosynthesis. May increase the efficiency of translation by recycling ribosomes from one round of translation to another. The chain is Ribosome-recycling factor from Bacteroides fragilis (strain ATCC 25285 / DSM 2151 / CCUG 4856 / JCM 11019 / LMG 10263 / NCTC 9343 / Onslow / VPI 2553 / EN-2).